We begin with the raw amino-acid sequence, 260 residues long: Snake venom serine protease KN14 (260 aa).

A signal peptide spans 1–18 (MVLIRVLANLLILQLSYA). The propeptide occupies 19-24 (QKSSEL). Residues 25-251 (VIGGDECNIN…HLDWIQSIIA (227 aa)) enclose the Peptidase S1 domain. 5 disulfide bridges follow: cysteine 31/cysteine 165, cysteine 100/cysteine 258, cysteine 144/cysteine 212, cysteine 176/cysteine 191, and cysteine 202/cysteine 227. Histidine 67 serves as the catalytic Charge relay system. N-linked (GlcNAc...) asparagine glycosylation is present at asparagine 105. Aspartate 112 (charge relay system) is an active-site residue. Asparagine 172 carries N-linked (GlcNAc...) asparagine glycosylation. The active-site Charge relay system is the serine 206. 2 N-linked (GlcNAc...) asparagine glycosylation sites follow: asparagine 213 and asparagine 255.

Belongs to the peptidase S1 family. Snake venom subfamily. In terms of assembly, monomer. In terms of tissue distribution, expressed by the venom gland.

It is found in the secreted. Snake venom serine protease that may act in the hemostasis system of the prey. The polypeptide is Snake venom serine protease KN14 (Trimeresurus stejnegeri (Chinese green tree viper)).